The following is a 230-amino-acid chain: Cytochrome c oxidase subunit 2 (230 aa).

At 1–14 (MAHPSQLGFQDAAS) the chain is on the mitochondrial intermembrane side. The chain crosses the membrane as a helical span at residues 15–45 (PVMEELIHFHDHTLMIVFLISTLVLYIITAM). Residues 46 to 59 (VSTKLTNKYILDSQ) lie on the Mitochondrial matrix side of the membrane. A helical membrane pass occupies residues 60-87 (EIEIVWTILPAIILIMIALPSLRILYLM). Topologically, residues 88 to 230 (DEINDPHLTI…TWSSLMLEEA (143 aa)) are mitochondrial intermembrane. His-161, Cys-196, Glu-198, Cys-200, His-204, and Met-207 together coordinate Cu cation. Position 198 (Glu-198) interacts with Mg(2+).

It belongs to the cytochrome c oxidase subunit 2 family. In terms of assembly, component of the cytochrome c oxidase (complex IV, CIV), a multisubunit enzyme composed of 14 subunits. The complex is composed of a catalytic core of 3 subunits MT-CO1, MT-CO2 and MT-CO3, encoded in the mitochondrial DNA, and 11 supernumerary subunits COX4I, COX5A, COX5B, COX6A, COX6B, COX6C, COX7A, COX7B, COX7C, COX8 and NDUFA4, which are encoded in the nuclear genome. The complex exists as a monomer or a dimer and forms supercomplexes (SCs) in the inner mitochondrial membrane with NADH-ubiquinone oxidoreductase (complex I, CI) and ubiquinol-cytochrome c oxidoreductase (cytochrome b-c1 complex, complex III, CIII), resulting in different assemblies (supercomplex SCI(1)III(2)IV(1) and megacomplex MCI(2)III(2)IV(2)). Found in a complex with TMEM177, COA6, COX18, COX20, SCO1 and SCO2. Interacts with TMEM177 in a COX20-dependent manner. Interacts with COX20. Interacts with COX16. Cu cation serves as cofactor.

The protein localises to the mitochondrion inner membrane. The catalysed reaction is 4 Fe(II)-[cytochrome c] + O2 + 8 H(+)(in) = 4 Fe(III)-[cytochrome c] + 2 H2O + 4 H(+)(out). In terms of biological role, component of the cytochrome c oxidase, the last enzyme in the mitochondrial electron transport chain which drives oxidative phosphorylation. The respiratory chain contains 3 multisubunit complexes succinate dehydrogenase (complex II, CII), ubiquinol-cytochrome c oxidoreductase (cytochrome b-c1 complex, complex III, CIII) and cytochrome c oxidase (complex IV, CIV), that cooperate to transfer electrons derived from NADH and succinate to molecular oxygen, creating an electrochemical gradient over the inner membrane that drives transmembrane transport and the ATP synthase. Cytochrome c oxidase is the component of the respiratory chain that catalyzes the reduction of oxygen to water. Electrons originating from reduced cytochrome c in the intermembrane space (IMS) are transferred via the dinuclear copper A center (CU(A)) of subunit 2 and heme A of subunit 1 to the active site in subunit 1, a binuclear center (BNC) formed by heme A3 and copper B (CU(B)). The BNC reduces molecular oxygen to 2 water molecules using 4 electrons from cytochrome c in the IMS and 4 protons from the mitochondrial matrix. The chain is Cytochrome c oxidase subunit 2 (MT-CO2) from Scyliorhinus canicula (Small-spotted catshark).